The sequence spans 466 residues: Soluble pyridine nucleotide transhydrogenase (466 aa).

FAD is bound at residue E36 to C45.

Belongs to the class-I pyridine nucleotide-disulfide oxidoreductase family. The cofactor is FAD.

It localises to the cytoplasm. It catalyses the reaction NAD(+) + NADPH = NADH + NADP(+). Its function is as follows. Conversion of NADPH, generated by peripheral catabolic pathways, to NADH, which can enter the respiratory chain for energy generation. This Citrobacter koseri (strain ATCC BAA-895 / CDC 4225-83 / SGSC4696) protein is Soluble pyridine nucleotide transhydrogenase.